A 287-amino-acid chain; its full sequence is MMKNILAIQSHVVYGHAGNSAVEFPMRRLGANVWPLNTVQFSNHTQYGKWTGCVMPPSHLTEIVQGIAAIDKLHTCDAVLSGYLGSAEQGEHILGIVRQVKAANPQAKYFCDPVMGHPEKGCIVAPGVAEFHVRHGLPASDIIAPNLVELEILCEHPVNNVEEAVLAARELIAQGPQIVLVKHLAQAGYSRDRFEMLLVTADEAWHISRPLVDFGMRQPVGVGDVTSGLLLVKLLQGATLQEALEHVTAAVYEIMVTTKAMQEYELQVVAAQDRIAKPEHYFSATKL.

Residues Ser10 and 45-46 (TQ) contribute to the substrate site. ATP contacts are provided by residues Asp112, Ala144, Glu149, Lys182, and 209–212 (RPLV). Asp224 provides a ligand contact to substrate.

The protein belongs to the pyridoxine kinase family. PdxY subfamily. Homodimer. Mg(2+) is required as a cofactor.

It catalyses the reaction pyridoxal + ATP = pyridoxal 5'-phosphate + ADP + H(+). Its pathway is cofactor metabolism; pyridoxal 5'-phosphate salvage; pyridoxal 5'-phosphate from pyridoxal: step 1/1. Its function is as follows. Pyridoxal kinase involved in the salvage pathway of pyridoxal 5'-phosphate (PLP). Catalyzes the phosphorylation of pyridoxal to PLP. The sequence is that of Pyridoxal kinase PdxY from Shigella dysenteriae serotype 1 (strain Sd197).